A 128-amino-acid polypeptide reads, in one-letter code: CD59 glycoprotein (128 aa).

Residues 1-25 (MGIQGGSVLFGLLLVLAVFCHSGNS) form the signal peptide. In terms of domain architecture, UPAR/Ly6 spans 26 to 108 (LQCYSCPYPT…ALKNGGTTLS (83 aa)). Intrachain disulfides connect C28–C51, C31–C38, C44–C64, C70–C88, and C89–C94. An N-linked (GlcNAc...) asparagine glycan is attached at N43. N102 carries the GPI-anchor amidated asparagine lipid modification. Positions 103 to 128 (GGTTLSKKTVLLLVIPFLVAAWSLHP) are cleaved as a propeptide — removed in mature form.

In terms of assembly, interacts with T-cell surface antigen CD2. N- and O-glycosylated.

It localises to the cell membrane. Its subcellular location is the secreted. Functionally, potent inhibitor of the complement membrane attack complex (MAC) action, which protects self-cells from damage during complement activation. Acts by binding to the beta-haipins of C8 (C8A and C8B) components of the assembling MAC, forming an intermolecular beta-sheet that prevents incorporation of the multiple copies of C9 required for complete formation of the osmolytic pore. This chain is CD59 glycoprotein, found in Aotus trivirgatus (Three-striped night monkey).